Consider the following 387-residue polypeptide: Eukaryotic translation initiation factor 3 subunit M (387 aa).

One can recognise a PCI domain in the interval 181-340 (LSSKVMIELL…RKVHISSTMH (160 aa)).

Belongs to the eIF-3 subunit M family. As to quaternary structure, component of the eukaryotic translation initiation factor 3 (eIF-3) complex. The eIF-3 complex interacts with pix.

The protein localises to the cytoplasm. It is found in the golgi apparatus. Functionally, component of the eukaryotic translation initiation factor 3 (eIF-3) complex, which is involved in protein synthesis of a specialized repertoire of mRNAs and, together with other initiation factors, stimulates binding of mRNA and methionyl-tRNAi to the 40S ribosome. The eIF-3 complex specifically targets and initiates translation of a subset of mRNAs involved in cell proliferation. This is Eukaryotic translation initiation factor 3 subunit M from Drosophila mojavensis (Fruit fly).